Here is a 981-residue protein sequence, read N- to C-terminus: Translation initiation factor IF-2 (981 aa).

The disordered stretch occupies residues 31 to 370 (FVKSASSTVE…SKRAKRAEYE (340 aa)). Residues 64–87 (GAAAPAARPAAKPGAPSPSAAKPG) show a composition bias toward low complexity. Residues 88–111 (GPRPGPKPAAPAPAAPAAPAPAAP) show a composition bias toward pro residues. Positions 112 to 121 (AAPAAAAPAA) are enriched in low complexity. The span at 136–145 (PAQPARPAPA) shows a compositional bias: pro residues. Residues 146–165 (APAASAPAAPAAPAAPSTGA) show a composition bias toward low complexity. The segment covering 256–269 (RPSPGSMPPRPNPG) has biased composition (pro residues). The span at 270 to 279 (AMPARSARPA) shows a compositional bias: low complexity. The span at 280–339 (PGGGGRPGRPGGAPGGRPGGGGGGYRGGGAPGAGAGAGAPGGAAPAGGFRGRPGGGGRPG) shows a compositional bias: gly residues. The span at 356–365 (RRGRKSKRAK) shows a compositional bias: basic residues. Residues 477 to 649 (SRPPVVTVMG…VLLTADASLD (173 aa)) form the tr-type G domain. The tract at residues 486-493 (GHVDHGKT) is G1. Residue 486-493 (GHVDHGKT) participates in GTP binding. The G2 stretch occupies residues 511 to 515 (GITQH). Positions 536 to 539 (DTPG) are G3. Residues 536-540 (DTPGH) and 590-593 (NKID) contribute to the GTP site. The G4 stretch occupies residues 590-593 (NKID). The tract at residues 626-628 (SAK) is G5.

Belongs to the TRAFAC class translation factor GTPase superfamily. Classic translation factor GTPase family. IF-2 subfamily.

It is found in the cytoplasm. Its function is as follows. One of the essential components for the initiation of protein synthesis. Protects formylmethionyl-tRNA from spontaneous hydrolysis and promotes its binding to the 30S ribosomal subunits. Also involved in the hydrolysis of GTP during the formation of the 70S ribosomal complex. This is Translation initiation factor IF-2 from Rhodococcus erythropolis (strain PR4 / NBRC 100887).